Reading from the N-terminus, the 96-residue chain is Co-chaperonin GroES (96 aa).

Belongs to the GroES chaperonin family. Heptamer of 7 subunits arranged in a ring. Interacts with the chaperonin GroEL.

It is found in the cytoplasm. Together with the chaperonin GroEL, plays an essential role in assisting protein folding. The GroEL-GroES system forms a nano-cage that allows encapsulation of the non-native substrate proteins and provides a physical environment optimized to promote and accelerate protein folding. GroES binds to the apical surface of the GroEL ring, thereby capping the opening of the GroEL channel. The chain is Co-chaperonin GroES from Chromohalobacter salexigens (strain ATCC BAA-138 / DSM 3043 / CIP 106854 / NCIMB 13768 / 1H11).